Consider the following 218-residue polypeptide: Octanoyltransferase (218 aa).

Residues 32–211 (INTYDEIWFL…KLSQLLNVSI (180 aa)) form the BPL/LPL catalytic domain. Substrate contacts are provided by residues 75 to 82 (RGGQITYH), 142 to 144 (SLG), and 155 to 157 (GLS). Cysteine 173 acts as the Acyl-thioester intermediate in catalysis.

It belongs to the LipB family.

The protein localises to the cytoplasm. It carries out the reaction octanoyl-[ACP] + L-lysyl-[protein] = N(6)-octanoyl-L-lysyl-[protein] + holo-[ACP] + H(+). It functions in the pathway protein modification; protein lipoylation via endogenous pathway; protein N(6)-(lipoyl)lysine from octanoyl-[acyl-carrier-protein]: step 1/2. In terms of biological role, catalyzes the transfer of endogenously produced octanoic acid from octanoyl-acyl-carrier-protein onto the lipoyl domains of lipoate-dependent enzymes. Lipoyl-ACP can also act as a substrate although octanoyl-ACP is likely to be the physiological substrate. This is Octanoyltransferase from Buchnera aphidicola subsp. Schizaphis graminum (strain Sg).